Here is a 688-residue protein sequence, read N- to C-terminus: Protein sel-1 homolog 2 (688 aa).

The first 18 residues, Met-1–Thr-18, serve as a signal peptide directing secretion. The Extracellular portion of the chain corresponds to Lys-19 to Thr-662. Asn-34 carries N-linked (GlcNAc...) asparagine glycosylation. Sel1-like repeat units follow at residues Gly-107–Asn-142, Leu-143–Ser-178, Tyr-179–Ser-214, Met-215–Ala-250, Val-297–Ser-333, Ala-334–Asn-370, Ala-371–Trp-406, Pro-407–Gln-442, Pro-443–His-478, Ala-551–His-586, and Ala-588–Pro-623. A glycan (N-linked (GlcNAc...) asparagine) is linked at Asn-162. Residues Ile-663 to Leu-683 form a helical membrane-spanning segment. Topologically, residues Arg-684–Arg-688 are cytoplasmic.

This sequence belongs to the sel-1 family.

It localises to the membrane. The protein resides in the cell projection. Its subcellular location is the cilium. It is found in the nucleus speckle. This Rattus norvegicus (Rat) protein is Protein sel-1 homolog 2 (Sel1l2).